The sequence spans 521 residues: Spermidine transporter DUR31 (521 aa).

A helical membrane pass occupies residues 11–31; it reads AIIYLSYAFMLATGLFLAWKF. The N-linked (GlcNAc...) asparagine glycan is linked to asparagine 41. 12 consecutive transmembrane segments (helical) span residues 47–67, 79–99, 117–137, 156–176, 187–207, 227–247, 264–284, 310–330, 354–374, 377–397, 406–426, and 453–473; these read IPLALNFVASAMGVGIITTYA, LVYTICGAIPIVGFAVVGPVI, FGMVTALYLSAFTCLTMFLFM, ALGAVIVECVVTTIYTFFGGF, GVCVLLLLIICAAGMGSYIEI, LVYILFVAIVTNDCFMSGFWL, IAAFVTFAICTLIGTTGFLAV, WLVAFVLIFCIVLSTCTFDSL, IMLILIMVPIVVLAVKVADNI, IYLIADLVSAAIIPSVFLGLA, GFDVMAGGLGALLGVFIFGTV, and FGAFVIAPVGGVIITLASAAL.

The protein belongs to the sodium:solute symporter (SSF) (TC 2.A.21) family.

The protein localises to the membrane. The catalysed reaction is spermidine(in) = spermidine(out). Functionally, spermidine transporter that is also used by salivary gland-secreted histatin 5 (Hst 5) to enter into candidal cells. A major component of host nonimmune defense systems is salivary histatins, a family of small (3-4 kDa), histidine-rich, cationic proteins secreted by major salivary glands in humans and higher primates. Hst 5 is the most potent of the 12 histatin family members and has fungicidal activity against blastoconidial and filamentous forms of Candida albicans. DUR31 only functions under high concentrations of Hst 5. Hst 5 cojugates to spermidine to be uptaken by DUR31. The chain is Spermidine transporter DUR31 from Candida albicans (strain SC5314 / ATCC MYA-2876) (Yeast).